We begin with the raw amino-acid sequence, 537 residues long: Extracellular exo-inulinase inuE (537 aa).

The first 19 residues, 1-19 (MARLLKAVTVCALAGIAHA), serve as a signal peptide directing secretion. Residue aspartate 41 is part of the active site. N-linked (GlcNAc...) asparagine glycans are attached at residues asparagine 49, asparagine 67, asparagine 112, asparagine 300, asparagine 363, asparagine 398, asparagine 430, and asparagine 531.

It belongs to the glycosyl hydrolase 32 family.

It is found in the secreted. It catalyses the reaction Hydrolysis of terminal, non-reducing (2-&gt;1)- and (2-&gt;6)-linked beta-D-fructofuranose residues in fructans.. The catalytic activity is increased by manganese cathions, but strongly inhibited by other metal ions such as copper, aluminum, silver, iron, nickel, zinc and magnesium cathions. Exo-inulinase involved in utilization of the plant storage polymer inulin, consisting of fructooligosaccharides with a degree of polymerization (DP) value from 2 to 60. Splits off terminal fructose units successively from the non-reducing end of the inulin molecule, and also hydrolyze sucrose and raffinose. The protein is Extracellular exo-inulinase inuE (exoI) of Aspergillus ficuum.